The chain runs to 331 residues: Heme A synthase (331 aa).

8 helical membrane-spanning segments follow: residues 6–26 (VAIW…IGGF), 87–107 (YVHR…FIYF), 124–144 (ALLF…SGLV), 154–174 (LALH…QFFD), 193–213 (IWII…VAGL), 251–271 (VQFI…ILTI), 279–299 (LYVM…TLLL), and 301–321 (IPMA…GSGL). His255 contacts heme. His309 is a binding site for heme.

Belongs to the COX15/CtaA family. Type 2 subfamily. Interacts with CtaB. The cofactor is heme b.

The protein resides in the cell membrane. The enzyme catalyses Fe(II)-heme o + 2 A + H2O = Fe(II)-heme a + 2 AH2. It participates in porphyrin-containing compound metabolism; heme A biosynthesis; heme A from heme O: step 1/1. Catalyzes the conversion of heme O to heme A by two successive hydroxylations of the methyl group at C8. The first hydroxylation forms heme I, the second hydroxylation results in an unstable dihydroxymethyl group, which spontaneously dehydrates, resulting in the formyl group of heme A. The polypeptide is Heme A synthase (Wolbachia pipientis subsp. Culex pipiens (strain wPip)).